The primary structure comprises 442 residues: Lysosomal dipeptide transporter MFSD1 (442 aa).

The Dileucine internalization motif motif lies at 8-9 (LL). 10 helical membrane-spanning segments follow: residues 38 to 58 (LLVL…YDNP), 85 to 105 (TVIF…GALV), 107 to 127 (AFWL…SLAV), 187 to 207 (LLIG…LAYL), 238 to 258 (LWLI…FIGL), 276 to 296 (AINS…GILV), 303 to 323 (IIWV…LAFT), 333 to 353 (LLGV…AFVV), 364 to 384 (FMQS…GMIL), and 390 to 410 (LFLE…VVML).

This sequence belongs to the major facilitator superfamily. In terms of assembly, homodimer. Interacts with lysosomal protein GLMP (via lumenal domain); the interaction starts while both proteins are still in the endoplasmic reticulum and is required for stabilization of MFSD1 in lysosomes but has no direct effect on its targeting to lysosomes or transporter activity.

The protein localises to the lysosome membrane. It catalyses the reaction L-alpha-aminoacyl-L-arginine(out) = L-alpha-aminoacyl-L-arginine(in). It carries out the reaction L-arginyl-L-alpha-amino acid(out) = L-arginyl-L-alpha-amino acid(in). The enzyme catalyses L-arginyl-glycine(out) = L-arginyl-glycine(in). The catalysed reaction is L-alpha-aminoacyl-L-lysine(out) = L-alpha-aminoacyl-L-lysine(in). It catalyses the reaction L-aspartyl-L-lysine(out) = L-aspartyl-L-lysine(in). It carries out the reaction L-alanyl-L-lysine(out) = L-alanyl-L-lysine(in). The enzyme catalyses L-lysyl-L-alpha-amino acid(out) = L-lysyl-L-alpha-amino acid(in). The catalysed reaction is L-lysyl-L-alanine(out) = L-lysyl-L-alanine(in). It catalyses the reaction L-lysyl-L-lysine(out) = L-lysyl-L-lysine(in). It carries out the reaction L-lysyl-glycine(out) = L-lysyl-glycine(in). The enzyme catalyses L-alpha-aminoacyl-L-histidine(out) = L-alpha-aminoacyl-L-histidine(in). The catalysed reaction is L-histidyl-L-alpha-amino acid(out) = L-histidyl-L-alpha-amino acid(in). It catalyses the reaction L-histidyl-glycine(out) = L-histidyl-glycine(in). Lysosomal dipeptide uniporter that selectively exports lysine, arginine or histidine-containing dipeptides with a net positive charge from the lysosome lumen into the cytosol. Could play a role in a specific type of protein O-glycosylation indirectly regulating macrophages migration and tissue invasion. Also essential for liver homeostasis. This chain is Lysosomal dipeptide transporter MFSD1, found in Gallus gallus (Chicken).